The following is a 157-amino-acid chain: MSQVILDLQLACENHAGLPDEAQFQRWLDGVIPQFQEEAEVTIRLVDETESHDLNLTYRGKDKPTNVLSFPFEAPPGIEMPLLGDLIICRQVVEQEAQEQSKPLEAHWAHMVVHGSLHLLGYDHIDDDEAEEMESLETEIMLAMGYEDPYIAEKIAE.

Positions 114, 118, and 124 each coordinate Zn(2+).

The protein belongs to the endoribonuclease YbeY family. The cofactor is Zn(2+).

It is found in the cytoplasm. In terms of biological role, single strand-specific metallo-endoribonuclease involved in late-stage 70S ribosome quality control and in maturation of the 3' terminus of the 16S rRNA. The polypeptide is Endoribonuclease YbeY (Salmonella dublin (strain CT_02021853)).